A 445-amino-acid chain; its full sequence is MISLNIEKTFGFISKESVSAYEAQVKAAQEALENGTGKGNDFLGWLHLPSSISKEHLADLKATAQVLRDNCEVVIVAGIGGSYLGARAVIEALSNSFTWLQEKKTAPVMIYAGHNIGEDYLYELTEFLKDKKFGVINISKSGTTTETALAFRLLKKQCEDQRGKEMAKKVIVAVTDAKKGAARVTADKEGYKSFIIPDNVGGRFSVLTPVGLLPIAVAGFDIEQLVNGAADMEKACGADVPFAENPAAIYAATRNELYKNGKKIEILVNFCPKLHYVSEWWKQLYGESEGKDNKGIFPAAVDFSTDLHSMGQWIQEGERTIFETVISVDKVNHKLEVPSDEANLDGLNFLAGKRVDEVNKMAELGTQLAHVDGGVPNMRIVIPELSEFSIGQLLYFFEKACGISGYLLGVNPFNQPGVEAYKKNMFALLNKPGYEEESKAIQARL.

The active-site Proton donor is E287. Catalysis depends on residues H308 and K422.

Belongs to the GPI family.

The protein localises to the cytoplasm. The catalysed reaction is alpha-D-glucose 6-phosphate = beta-D-fructose 6-phosphate. It functions in the pathway carbohydrate biosynthesis; gluconeogenesis. It participates in carbohydrate degradation; glycolysis; D-glyceraldehyde 3-phosphate and glycerone phosphate from D-glucose: step 2/4. Catalyzes the reversible isomerization of glucose-6-phosphate to fructose-6-phosphate. The polypeptide is Glucose-6-phosphate isomerase (Bacteroides fragilis (strain ATCC 25285 / DSM 2151 / CCUG 4856 / JCM 11019 / LMG 10263 / NCTC 9343 / Onslow / VPI 2553 / EN-2)).